Consider the following 110-residue polypeptide: Iron-sulfur cluster assembly protein CyaY (110 aa).

This sequence belongs to the frataxin family.

In terms of biological role, involved in iron-sulfur (Fe-S) cluster assembly. May act as a regulator of Fe-S biogenesis. The protein is Iron-sulfur cluster assembly protein CyaY of Pseudomonas putida (strain GB-1).